The primary structure comprises 145 residues: Bacilliredoxin SAOUHSC_01610 (145 aa).

It belongs to the bacilliredoxin family.

The sequence is that of Bacilliredoxin SAOUHSC_01610 from Staphylococcus aureus (strain NCTC 8325 / PS 47).